Here is a 338-residue protein sequence, read N- to C-terminus: 1-aminocyclopropane-1-carboxylate deaminase (338 aa).

Lys-51 carries the post-translational modification N6-(pyridoxal phosphate)lysine. The Nucleophile role is filled by Ser-78.

This sequence belongs to the ACC deaminase/D-cysteine desulfhydrase family. In terms of assembly, homotrimer. Pyridoxal 5'-phosphate is required as a cofactor.

The enzyme catalyses 1-aminocyclopropane-1-carboxylate + H2O = 2-oxobutanoate + NH4(+). Its function is as follows. Catalyzes a cyclopropane ring-opening reaction, the irreversible conversion of 1-aminocyclopropane-1-carboxylate (ACC) to ammonia and alpha-ketobutyrate. Allows growth on ACC as a nitrogen source. In Pseudomonas syringae pv. syringae (strain B728a), this protein is 1-aminocyclopropane-1-carboxylate deaminase.